Consider the following 263-residue polypeptide: Pro-opiomelanocortin (263 aa).

Positions 1-26 are cleaved as a signal peptide; it reads MLQPVWHACILAILGVFIFHVGEVRS. Q27 bears the Pyrrolidone carboxylic acid mark. F87 bears the Phenylalanine amide mark. The N-linked (GlcNAc...) asparagine glycan is linked to N91. Positions 107 to 141 are excised as a propeptide; that stretch reads EDIANYPILNLFLGSDNQNTQEGIMEDDALDRQDS. Position 156 is a valine amide (V156).

Belongs to the POMC family. In terms of processing, specific enzymatic cleavages at paired basic residues yield the different active peptides.

It is found in the secreted. Functionally, stimulates the adrenal glands to release cortisol. Its function is as follows. Anorexigenic peptide. Increases the pigmentation of skin by increasing melanin production in melanocytes. In terms of biological role, increases the pigmentation of skin by increasing melanin production in melanocytes. Endogenous orexigenic opiate. Functionally, endogenous opiate. This chain is Pro-opiomelanocortin (pomc), found in Aquarana catesbeiana (American bullfrog).